A 446-amino-acid chain; its full sequence is Histidine--tRNA ligase (446 aa).

It belongs to the class-II aminoacyl-tRNA synthetase family. As to quaternary structure, homodimer.

It localises to the cytoplasm. It catalyses the reaction tRNA(His) + L-histidine + ATP = L-histidyl-tRNA(His) + AMP + diphosphate + H(+). The sequence is that of Histidine--tRNA ligase from Paraburkholderia xenovorans (strain LB400).